Reading from the N-terminus, the 571-residue chain is Acetolactate synthase large subunit (571 aa).

Glu51 provides a ligand contact to thiamine diphosphate. Residues Arg153, 261-282 (HGTY…IGVR), and 304-323 (DIDP…IVGD) each bind FAD. Residues 394-474 (QHQMFTALYY…VLILNLNNSS (81 aa)) form a thiamine pyrophosphate binding region. Residues Asp445 and Asn472 each contribute to the Mg(2+) site.

The protein belongs to the TPP enzyme family. In terms of assembly, dimer of large and small chains. Mg(2+) serves as cofactor. Requires thiamine diphosphate as cofactor.

It carries out the reaction 2 pyruvate + H(+) = (2S)-2-acetolactate + CO2. It participates in amino-acid biosynthesis; L-isoleucine biosynthesis; L-isoleucine from 2-oxobutanoate: step 1/4. Its pathway is amino-acid biosynthesis; L-valine biosynthesis; L-valine from pyruvate: step 1/4. In Buchnera aphidicola subsp. Acyrthosiphon pisum (strain APS) (Acyrthosiphon pisum symbiotic bacterium), this protein is Acetolactate synthase large subunit (ilvI).